Here is a 201-residue protein sequence, read N- to C-terminus: Desiccation-related protein PCC3-06 (201 aa).

The segment covering 41–54 (TVASQSQGRQQVSE) has biased composition (polar residues). 2 disordered regions span residues 41-155 (TVAS…QNVK) and 177-201 (MGKS…TNYF). Composition is skewed to basic and acidic residues over residues 57–76 (EDAK…KTSE), 108–144 (GELK…ERVA), and 177–193 (MGKS…ETKK).

It belongs to the LEA type 1 family.

The polypeptide is Desiccation-related protein PCC3-06 (Craterostigma plantagineum (Blue gem)).